The primary structure comprises 344 residues: Putative replication factor C small subunit L499 (344 aa).

57-64 (GPSGSGKT) serves as a coordination point for ATP.

It belongs to the activator 1 small subunits family. RfcS subfamily.

Functionally, part of the RFC clamp loader complex which loads the PCNA sliding clamp onto DNA. This Acanthamoeba polyphaga mimivirus (APMV) protein is Putative replication factor C small subunit L499.